Consider the following 282-residue polypeptide: Shikimate dehydrogenase (NADP(+)) (282 aa).

Shikimate-binding positions include 15-17 and Thr-62; that span reads SKS. The active-site Proton acceptor is Lys-66. Shikimate-binding residues include Asn-87 and Asp-103. NADP(+)-binding positions include 127–131, 151–156, and Met-220; these read GAGGA and NRTHTK. Residue Tyr-222 coordinates shikimate. Residue Gly-244 coordinates NADP(+).

Belongs to the shikimate dehydrogenase family. Homodimer.

The catalysed reaction is shikimate + NADP(+) = 3-dehydroshikimate + NADPH + H(+). The protein operates within metabolic intermediate biosynthesis; chorismate biosynthesis; chorismate from D-erythrose 4-phosphate and phosphoenolpyruvate: step 4/7. Its function is as follows. Involved in the biosynthesis of the chorismate, which leads to the biosynthesis of aromatic amino acids. Catalyzes the reversible NADPH linked reduction of 3-dehydroshikimate (DHSA) to yield shikimate (SA). The chain is Shikimate dehydrogenase (NADP(+)) from Shewanella baltica (strain OS195).